The primary structure comprises 474 residues: Glutamate--tRNA ligase (474 aa).

The 'HIGH' region motif lies at 9–19; sequence PSPTGYLHVGG. Residues 240 to 244 carry the 'KMSKS' region motif; it reads KLSKR. An ATP-binding site is contributed by Lys-243.

Belongs to the class-I aminoacyl-tRNA synthetase family. Glutamate--tRNA ligase type 1 subfamily. As to quaternary structure, monomer.

Its subcellular location is the cytoplasm. The enzyme catalyses tRNA(Glu) + L-glutamate + ATP = L-glutamyl-tRNA(Glu) + AMP + diphosphate. Its function is as follows. Catalyzes the attachment of glutamate to tRNA(Glu) in a two-step reaction: glutamate is first activated by ATP to form Glu-AMP and then transferred to the acceptor end of tRNA(Glu). This Vibrio vulnificus (strain YJ016) protein is Glutamate--tRNA ligase.